An 84-amino-acid chain; its full sequence is UPF0291 protein EUBELI_00985 (84 aa).

The protein belongs to the UPF0291 family.

It is found in the cytoplasm. The chain is UPF0291 protein EUBELI_00985 from Lachnospira eligens (strain ATCC 27750 / DSM 3376 / VPI C15-48 / C15-B4) (Eubacterium eligens).